The primary structure comprises 243 residues: 7-cyano-7-deazaguanine synthase (243 aa).

18 to 28 serves as a coordination point for ATP; it reads FSGGQDSATCL. Zn(2+) contacts are provided by cysteine 206, cysteine 221, cysteine 224, and cysteine 227.

This sequence belongs to the QueC family. It depends on Zn(2+) as a cofactor.

The enzyme catalyses 7-carboxy-7-deazaguanine + NH4(+) + ATP = 7-cyano-7-deazaguanine + ADP + phosphate + H2O + H(+). It functions in the pathway purine metabolism; 7-cyano-7-deazaguanine biosynthesis. Its function is as follows. Catalyzes the ATP-dependent conversion of 7-carboxy-7-deazaguanine (CDG) to 7-cyano-7-deazaguanine (preQ(0)). The polypeptide is 7-cyano-7-deazaguanine synthase (Maricaulis maris (strain MCS10) (Caulobacter maris)).